A 273-amino-acid chain; its full sequence is MQIIRTIKELENFVQNASGKIGFVPTMGALHDGHVSLIKKCVSENETSIVSTFVNPTQFLPGEDLDKYPRKEQSDIQICEQNGVSAIFIPDANELYFEDEPLIVAPKKLSTILEGKTRPGHFDGVLRVLNKLFRLTRANSVYMGKKDTQQLIIVQNMIKTFFLNIELVACDIVREPDGLALSSRNVYICDEDKCNALRLSRSLNKALNLIQNGEEDASEIKANMLEVLEPLKVDYVAVTDRNLNEISKVEKGNTIILVAAYVGKTRLIDNIWI.

Met27–His34 provides a ligand contact to ATP. The Proton donor role is filled by His34. A (R)-pantoate-binding site is contributed by Gln58. Gln58 contacts beta-alanine. Gly144 to Asp147 contacts ATP. Residue Gln150 participates in (R)-pantoate binding. Residues Val173 and Leu181–Arg184 each bind ATP.

This sequence belongs to the pantothenate synthetase family. In terms of assembly, homodimer.

It localises to the cytoplasm. The catalysed reaction is (R)-pantoate + beta-alanine + ATP = (R)-pantothenate + AMP + diphosphate + H(+). It functions in the pathway cofactor biosynthesis; (R)-pantothenate biosynthesis; (R)-pantothenate from (R)-pantoate and beta-alanine: step 1/1. Catalyzes the condensation of pantoate with beta-alanine in an ATP-dependent reaction via a pantoyl-adenylate intermediate. This chain is Pantothenate synthetase, found in Campylobacter concisus (strain 13826).